The following is a 762-amino-acid chain: Cellulose synthase-like protein H2 (762 aa).

The span at 1 to 15 shows a compositional bias: low complexity; the sequence is MAVVAAAAATGSTTR. The segment at 1–39 is disordered; the sequence is MAVVAAAAATGSTTRSGGGGGEGTRSGRKKPPPPPLQER. 2 helical membrane passes run 47-67 and 81-101; these read AWAW…LLAL and GVWR…ALNV. Residues D180 and D470 contribute to the active site. 6 helical membrane-spanning segments follow: residues 541–561, 582–602, 619–639, 673–693, 708–728, and 739–759; these read LAYL…CYGL, FSVP…EYMA, IISV…SLGL, LPVF…VTVG, APGI…FPFV, and GIPW…VTFC.

It belongs to the glycosyltransferase 2 family. Plant cellulose synthase-like H subfamily.

Its subcellular location is the golgi apparatus membrane. Thought to be a Golgi-localized beta-glycan synthase that polymerize the backbones of noncellulosic polysaccharides (hemicelluloses) of plant cell wall. The chain is Cellulose synthase-like protein H2 (CSLH2) from Oryza sativa subsp. japonica (Rice).